We begin with the raw amino-acid sequence, 293 residues long: Triplex capsid protein 2 (293 aa).

It belongs to the herpesviridae TRX2 protein family. Interacts with TRX1 and major capisd protein/MCP.

It is found in the virion. The protein localises to the host nucleus. Structural component of the T=16 icosahedral capsid. The capsid is composed of pentamers and hexamers of major capsid protein/MCP, which are linked together by heterotrimers called triplexes. These triplexes are formed by a single molecule of triplex protein 1/TRX1 and two copies of triplex protein 2/TRX2. Additionally, TRX1 is required for efficient transport of TRX2 to the nucleus, which is the site of capsid assembly. The sequence is that of Triplex capsid protein 2 from Homo sapiens (Human).